We begin with the raw amino-acid sequence, 336 residues long: MTFVESMQRRAVLAQKRLVLPEACEQRTLEAARLIVFRNIAAKVFLVGCERDIKNTADRCGIDLTDMVVIDPSVSKHRDQFAERYFQKRKHKGISLAQAAEDMRDPLRFAAMMLDQGHADAMVAGAENTTARVLRAGLTIIGTLPSVKTASSCFVMDTNNPRLGGTRGLFIFSDCAVIPTPTAEQLADIACSAAESCRTFIGEEPTVALLSYSTKGSGGDSDENILRVREAVRILHERRVDFTFDGELQLDAALVPKITEKKAPHSPITGKVNTLVFPDLSSGNIGYKLVQRLSDADAYGPFLQGFAKPLSDLSRGCSVEDIVAACAVTLVQSNGR.

It belongs to the phosphate acetyltransferase and butyryltransferase family.

The protein resides in the cytoplasm. The catalysed reaction is acetyl-CoA + phosphate = acetyl phosphate + CoA. It participates in metabolic intermediate biosynthesis; acetyl-CoA biosynthesis; acetyl-CoA from acetate: step 2/2. This is Phosphate acetyltransferase (pta) from Treponema pallidum (strain Nichols).